Consider the following 226-residue polypeptide: MREPLDPLGPALAQASLYLCTDARRERGDLAEFADAALAGGVDLIQLRDKGSAGERRFGPLEAREELAALEILAEAARRRGALLAVNDRADIALAAGADVLHLGQDDLPLPVARRIIGPRPLIGRSTHDSAQVSAAVAEEVDYFCVGPCWPTPTKPGREAPGLGLVREVASRATEKPWFAIGGIDEARLPEVLDAGARRIVVVRAITAADDPKAAARRLKDALVSR.

4-amino-2-methyl-5-(diphosphooxymethyl)pyrimidine contacts are provided by residues Q46–K50 and N87. 2 residues coordinate Mg(2+): D88 and D107. S126 contacts 4-amino-2-methyl-5-(diphosphooxymethyl)pyrimidine. T152–T154 is a binding site for 2-[(2R,5Z)-2-carboxy-4-methylthiazol-5(2H)-ylidene]ethyl phosphate. K155 lines the 4-amino-2-methyl-5-(diphosphooxymethyl)pyrimidine pocket. Residue G183 participates in 2-[(2R,5Z)-2-carboxy-4-methylthiazol-5(2H)-ylidene]ethyl phosphate binding.

Belongs to the thiamine-phosphate synthase family. Mg(2+) is required as a cofactor.

It carries out the reaction 2-[(2R,5Z)-2-carboxy-4-methylthiazol-5(2H)-ylidene]ethyl phosphate + 4-amino-2-methyl-5-(diphosphooxymethyl)pyrimidine + 2 H(+) = thiamine phosphate + CO2 + diphosphate. The enzyme catalyses 2-(2-carboxy-4-methylthiazol-5-yl)ethyl phosphate + 4-amino-2-methyl-5-(diphosphooxymethyl)pyrimidine + 2 H(+) = thiamine phosphate + CO2 + diphosphate. It catalyses the reaction 4-methyl-5-(2-phosphooxyethyl)-thiazole + 4-amino-2-methyl-5-(diphosphooxymethyl)pyrimidine + H(+) = thiamine phosphate + diphosphate. It participates in cofactor biosynthesis; thiamine diphosphate biosynthesis; thiamine phosphate from 4-amino-2-methyl-5-diphosphomethylpyrimidine and 4-methyl-5-(2-phosphoethyl)-thiazole: step 1/1. In terms of biological role, condenses 4-methyl-5-(beta-hydroxyethyl)thiazole monophosphate (THZ-P) and 2-methyl-4-amino-5-hydroxymethyl pyrimidine pyrophosphate (HMP-PP) to form thiamine monophosphate (TMP). The chain is Thiamine-phosphate synthase from Mycobacterium sp. (strain JLS).